The sequence spans 135 residues: Mu-like prophage FluMu protein gp46 (135 aa).

It to phage Mu protein gp46.

This Haemophilus influenzae (strain ATCC 51907 / DSM 11121 / KW20 / Rd) protein is Mu-like prophage FluMu protein gp46.